The chain runs to 288 residues: Homoserine kinase (288 aa).

Position 79–89 (79–89 (PPARGLGSSSA)) interacts with ATP.

It belongs to the GHMP kinase family. Homoserine kinase subfamily.

Its subcellular location is the cytoplasm. It carries out the reaction L-homoserine + ATP = O-phospho-L-homoserine + ADP + H(+). It functions in the pathway amino-acid biosynthesis; L-threonine biosynthesis; L-threonine from L-aspartate: step 4/5. In terms of biological role, catalyzes the ATP-dependent phosphorylation of L-homoserine to L-homoserine phosphate. The protein is Homoserine kinase of Listeria welshimeri serovar 6b (strain ATCC 35897 / DSM 20650 / CCUG 15529 / CIP 8149 / NCTC 11857 / SLCC 5334 / V8).